Here is an 824-residue protein sequence, read N- to C-terminus: Leucine--tRNA ligase (824 aa).

The 'HIGH' region motif lies at 42 to 52 (PYPSGRIHMGH). The short motif at 581–585 (KMSKS) is the 'KMSKS' region element. Lys584 lines the ATP pocket.

The protein belongs to the class-I aminoacyl-tRNA synthetase family.

It localises to the cytoplasm. The enzyme catalyses tRNA(Leu) + L-leucine + ATP = L-leucyl-tRNA(Leu) + AMP + diphosphate. This is Leucine--tRNA ligase from Geotalea uraniireducens (strain Rf4) (Geobacter uraniireducens).